We begin with the raw amino-acid sequence, 255 residues long: tRNA (guanine-N(1)-)-methyltransferase (255 aa).

Residues G117 and L137–L142 each bind S-adenosyl-L-methionine.

The protein belongs to the RNA methyltransferase TrmD family. In terms of assembly, homodimer.

The protein resides in the cytoplasm. It catalyses the reaction guanosine(37) in tRNA + S-adenosyl-L-methionine = N(1)-methylguanosine(37) in tRNA + S-adenosyl-L-homocysteine + H(+). Its function is as follows. Specifically methylates guanosine-37 in various tRNAs. This Paraburkholderia phymatum (strain DSM 17167 / CIP 108236 / LMG 21445 / STM815) (Burkholderia phymatum) protein is tRNA (guanine-N(1)-)-methyltransferase.